We begin with the raw amino-acid sequence, 599 residues long: Vitamin B12-dependent ribonucleotide reductase (599 aa).

Position 193-197 (193-197) interacts with substrate; the sequence is PTGTI. The interval 519–555 is disordered; sequence LAQSAPRQAGPAKAATTAPAAKAQEPAAAPSPKQAHN. The segment covering 526 to 553 has biased composition (low complexity); it reads QAGPAKAATTAPAAKAQEPAAAPSPKQA.

Belongs to the ribonucleoside diphosphate reductase class-2 family. The cofactor is adenosylcob(III)alamin.

It carries out the reaction a 2'-deoxyribonucleoside 5'-diphosphate + [thioredoxin]-disulfide + H2O = a ribonucleoside 5'-diphosphate + [thioredoxin]-dithiol. In terms of biological role, catalyzes the reduction of ribonucleotides to deoxyribonucleotides. May function to provide a pool of deoxyribonucleotide precursors for DNA repair during oxygen limitation and/or for immediate growth after restoration of oxygen. The polypeptide is Vitamin B12-dependent ribonucleotide reductase (nrdJ) (Streptantibioticus cattleyicolor (Streptomyces cattleya)).